We begin with the raw amino-acid sequence, 256 residues long: MALAKRIIPCLDVDNGRVVKGVKFENIRDAGDPVEIARRYNEQGADEITFLDITASVDGRDTTLHTVERMASQVFIPLTVGGGVRTVQDIRNLLNAGADKVSINTAAVFNPEFVGEAADRFGSQCIVVAIDAKKVSGPGEAPRWEIFTHGGRKPTGLDAVEWAKKMEGLGAGEILLTSMDQDGMKNGFDLGVTRAISDALGIPVIASGGVGNLQHLADGILEGHASAVLAASIFHFGEYTVPEAKAYMASRGIVVR.

Active-site residues include D12 and D131.

Belongs to the HisA/HisF family. As to quaternary structure, heterodimer of HisH and HisF.

It localises to the cytoplasm. The enzyme catalyses 5-[(5-phospho-1-deoxy-D-ribulos-1-ylimino)methylamino]-1-(5-phospho-beta-D-ribosyl)imidazole-4-carboxamide + L-glutamine = D-erythro-1-(imidazol-4-yl)glycerol 3-phosphate + 5-amino-1-(5-phospho-beta-D-ribosyl)imidazole-4-carboxamide + L-glutamate + H(+). Its pathway is amino-acid biosynthesis; L-histidine biosynthesis; L-histidine from 5-phospho-alpha-D-ribose 1-diphosphate: step 5/9. Its function is as follows. IGPS catalyzes the conversion of PRFAR and glutamine to IGP, AICAR and glutamate. The HisF subunit catalyzes the cyclization activity that produces IGP and AICAR from PRFAR using the ammonia provided by the HisH subunit. The chain is Imidazole glycerol phosphate synthase subunit HisF from Pseudomonas entomophila (strain L48).